Here is a 155-residue protein sequence, read N- to C-terminus: Ciliary microtubule inner protein 2C (155 aa).

This sequence belongs to the CIMIP2 family.

The protein resides in the cytoplasm. The protein localises to the cytoskeleton. It localises to the cilium axoneme. Functionally, microtubule inner protein (MIP) part of the dynein-decorated doublet microtubules (DMTs) in cilia axoneme, which is required for motile cilia beating. The protein is Ciliary microtubule inner protein 2C (cimip2cb) of Xenopus laevis (African clawed frog).